The following is a 304-amino-acid chain: Ferredoxin fas2 (304 aa).

A 4Fe-4S ferredoxin-type domain is found at 2 to 29 (KVVVNERRCFGSGQCVLVAPEVFEQSND). Residues C10, C16, and C54 each coordinate [3Fe-4S] cluster. The tract at residues 66-304 (MRQEPTEFSY…QSARSSIQQR (239 aa)) is transketolase-like.

The protein in the C-terminal section; belongs to the transketolase family. [3Fe-4S] cluster is required as a cofactor.

Functionally, plays a role in electron transfer. The fas operon encodes genes involved in cytokinin production and in host plant fasciation (leafy gall). This chain is Ferredoxin fas2 (fas2), found in Rhodococcoides fascians (Rhodococcus fascians).